The following is an 859-amino-acid chain: Photoactivated adenylate cyclase subunit beta-like protein ST- (859 aa).

A BLUF 1 domain is found at 56–149 (LRRLMYLSKS…GRMYGDWHMK (94 aa)). Residues 420–444 (RPPIFDDTPKSNPRPRTPGYGGRQR) are disordered. Positions 471 to 563 (LTTLTYISQA…RVYTSEWTLT (93 aa)) constitute a BLUF 2 domain. Residues 814 to 859 (ARSGEQPLTEPEQAKPDFRVSPGRDRHGVSGRRSNSSQGKGSIQVG) form a disordered region. A compositionally biased stretch (basic and acidic residues) spans 825–841 (EQAKPDFRVSPGRDRHG). Residues 845–859 (RRSNSSQGKGSIQVG) show a composition bias toward polar residues.

As to quaternary structure, heterotetramer of two alpha and two beta subunits.

The protein resides in the cell projection. Its subcellular location is the cilium. It is found in the flagellum. The protein is Photoactivated adenylate cyclase subunit beta-like protein ST- of Euglena gracilis.